Reading from the N-terminus, the 297-residue chain is UTP--glucose-1-phosphate uridylyltransferase (297 aa).

The protein belongs to the UDPGP type 2 family.

It carries out the reaction alpha-D-glucose 1-phosphate + UTP + H(+) = UDP-alpha-D-glucose + diphosphate. Its pathway is carbohydrate metabolism; nucleotide-sugar metabolism. It participates in bacterial outer membrane biogenesis; lipopolysaccharide biosynthesis. In Escherichia coli O157:H7, this protein is UTP--glucose-1-phosphate uridylyltransferase (galF).